The chain runs to 383 residues: Neuropeptide Y receptor type 1 (383 aa).

The Extracellular portion of the chain corresponds to 1–44 (MNSTLSSQVENHSIYYNFSEKNSQFLAFENDDCHLPLAMIFTLA). N-linked (GlcNAc...) asparagine glycans are attached at residues Asn2, Asn11, and Asn17. The helical transmembrane segment at 45–65 (LAYGAVIILGVSGNLALIIII) threads the bilayer. At 66-76 (LKQKEMRNVTN) the chain is on the cytoplasmic side. The helical transmembrane segment at 77-97 (ILIVNLSFSDLLVAIMCLPFT) threads the bilayer. Topologically, residues 98–116 (FVYTLMDHWVFGEVMCKLN) are extracellular. A disulfide bridge connects residues Cys113 and Cys198. The chain crosses the membrane as a helical span at residues 117–137 (PFVQCVSITVSIFSLVLIAVE). Topologically, residues 138 to 154 (RHQLIINPRGWRPSNRH) are cytoplasmic. Residues 155–175 (AYVGIAVIWVLAVASSLPFLI) form a helical membrane-spanning segment. Topologically, residues 176–211 (YQVLTDEPFQNVTLDAFKDKYVCFDKFLSDSHRLSY) are extracellular. The chain crosses the membrane as a helical span at residues 212–232 (TTLLLVLQYFGPLCFIFICYF). Over 233-260 (KIYIRLKRRNNMMDKMRDNKYRSSETKR) the chain is Cytoplasmic. A helical transmembrane segment spans residues 261–281 (INVMLLSIVVAFAVCWLPLTI). At 282–299 (FNTVFDWNHQIIATCNHN) the chain is on the extracellular side. Residues 300 to 320 (LLFLLCHLTAMISTCINPIFY) form a helical membrane-spanning segment. The Cytoplasmic segment spans residues 321-383 (GFLNKNFQRD…KIHSDDNEKI (63 aa)). Cys338 is lipidated: S-palmitoyl cysteine. Ser368 bears the Phosphoserine mark.

This sequence belongs to the G-protein coupled receptor 1 family.

The protein resides in the cell membrane. Receptor for neuropeptide Y and peptide YY. In Sus scrofa (Pig), this protein is Neuropeptide Y receptor type 1 (NPY1R).